A 167-amino-acid polypeptide reads, in one-letter code: MSPRVLGGLAAFLCLVLDQANKLWLIHVFDIEARRPVRLAPFFDIIYERNPGISYSLFRAQSAMGRWILVALTLFAILLLSIWLWRATNRLVALALGCIIGGALGNAIDRIAAGAVADFYYFHIGSFSWYVFNLADAAIVAGVALLILDAFTSEEAGVPAPDSEGHS.

Helical transmembrane passes span 67–87 (WILV…LWRA) and 91–111 (LVAL…IDRI). Catalysis depends on residues Asp-118 and Asp-136. Residues 127–147 (FSWYVFNLADAAIVAGVALLI) form a helical membrane-spanning segment.

It belongs to the peptidase A8 family.

The protein localises to the cell inner membrane. The enzyme catalyses Release of signal peptides from bacterial membrane prolipoproteins. Hydrolyzes -Xaa-Yaa-Zaa-|-(S,diacylglyceryl)Cys-, in which Xaa is hydrophobic (preferably Leu), and Yaa (Ala or Ser) and Zaa (Gly or Ala) have small, neutral side chains.. It participates in protein modification; lipoprotein biosynthesis (signal peptide cleavage). Its function is as follows. This protein specifically catalyzes the removal of signal peptides from prolipoproteins. The chain is Lipoprotein signal peptidase from Beijerinckia indica subsp. indica (strain ATCC 9039 / DSM 1715 / NCIMB 8712).